We begin with the raw amino-acid sequence, 661 residues long: UvrABC system protein B (661 aa).

In terms of domain architecture, Helicase ATP-binding spans 25–414 (AGLSSKKRSQ…GTVVELIIRP (390 aa)). Position 38–45 (38–45 (GITGSGKT)) interacts with ATP. Residues 91–114 (YYDYYQPEAYIARTDTFIEKDSSI) carry the Beta-hairpin motif. The Helicase C-terminal domain maps to 430–592 (QVEDLISEIQ…IIPKTINRAI (163 aa)). In terms of domain architecture, UVR spans 621 to 656 (KTHIDKLKKEMLKAASNLEFEQAVKLRDQLKTLEEA).

This sequence belongs to the UvrB family. As to quaternary structure, forms a heterotetramer with UvrA during the search for lesions. Interacts with UvrC in an incision complex.

It localises to the cytoplasm. Its function is as follows. The UvrABC repair system catalyzes the recognition and processing of DNA lesions. A damage recognition complex composed of 2 UvrA and 2 UvrB subunits scans DNA for abnormalities. Upon binding of the UvrA(2)B(2) complex to a putative damaged site, the DNA wraps around one UvrB monomer. DNA wrap is dependent on ATP binding by UvrB and probably causes local melting of the DNA helix, facilitating insertion of UvrB beta-hairpin between the DNA strands. Then UvrB probes one DNA strand for the presence of a lesion. If a lesion is found the UvrA subunits dissociate and the UvrB-DNA preincision complex is formed. This complex is subsequently bound by UvrC and the second UvrB is released. If no lesion is found, the DNA wraps around the other UvrB subunit that will check the other stand for damage. This is UvrABC system protein B from Rickettsia conorii (strain ATCC VR-613 / Malish 7).